We begin with the raw amino-acid sequence, 219 residues long: Ribose-5-phosphate isomerase A (219 aa).

Residues 28–31 (TGST), 81–84 (DGAD), and 94–97 (KGGG) each bind substrate. Glu-103 acts as the Proton acceptor in catalysis. Lys-121 is a binding site for substrate.

This sequence belongs to the ribose 5-phosphate isomerase family. Homodimer.

It carries out the reaction aldehydo-D-ribose 5-phosphate = D-ribulose 5-phosphate. Its pathway is carbohydrate degradation; pentose phosphate pathway; D-ribose 5-phosphate from D-ribulose 5-phosphate (non-oxidative stage): step 1/1. In terms of biological role, catalyzes the reversible conversion of ribose-5-phosphate to ribulose 5-phosphate. The polypeptide is Ribose-5-phosphate isomerase A (Shewanella loihica (strain ATCC BAA-1088 / PV-4)).